Consider the following 244-residue polypeptide: Na(+)-translocating NADH-quinone reductase subunit E (244 aa).

Helical transmembrane passes span 11 to 31 (LLGIFLQATFIQNILLSTFLG), 50 to 70 (MSVALVLTITGSINWLVHYFI), 90 to 110 (FLELIMFIVVIAAFTQILEVL), 123 to 143 (GIFLPLIAVNCAILGGVLFGI), 153 to 173 (VVFSLGSGCGWWLAIVLFATI), and 191 to 211 (ISFITTGLMAMAFMGLTGIDI). A compositionally biased stretch (polar residues) spans 222–236 (VTNIATDSPQPNTHS). Positions 222–244 (VTNIATDSPQPNTHSSSEEPKAS) are disordered.

This sequence belongs to the NqrDE/RnfAE family. Composed of six subunits; NqrA, NqrB, NqrC, NqrD, NqrE and NqrF.

It localises to the cell inner membrane. It catalyses the reaction a ubiquinone + n Na(+)(in) + NADH + H(+) = a ubiquinol + n Na(+)(out) + NAD(+). NQR complex catalyzes the reduction of ubiquinone-1 to ubiquinol by two successive reactions, coupled with the transport of Na(+) ions from the cytoplasm to the periplasm. NqrA to NqrE are probably involved in the second step, the conversion of ubisemiquinone to ubiquinol. The protein is Na(+)-translocating NADH-quinone reductase subunit E of Chlamydia trachomatis serovar A (strain ATCC VR-571B / DSM 19440 / HAR-13).